The following is a 512-amino-acid chain: Glycosyltransferase sdnJ (512 aa).

Positions 1 to 24 are cleaved as a signal peptide; sequence MHAKRPSVLFFTISDFGYVNVVLA. Asn207 carries an N-linked (GlcNAc...) asparagine glycan.

Belongs to the UDP-glycosyltransferase family.

The catalysed reaction is sordaricin + GDP-6-deoxy-alpha-D-altrose = 4'-O-demethylsordarin + GDP + H(+). It functions in the pathway antibiotic biosynthesis. Glycosyltransferase; part of the gene cluster that mediates the biosynthesis of sordarin and hypoxysordarin, glycoside antibiotics with a unique tetracyclic diterpene aglycone structure. First, the geranylgeranyl diphosphate synthase sdnC constructs GGDP from farnesyl diphosphate and isopentenyl diphosphate. The diterpene cyclase sdnA then catalyzes the cyclization of GGDP to afford cycloaraneosene. Cycloaraneosene is then hydroxylated four times by the putative cytochrome P450 monooxygenases sdnB, sdnE, sdnF and sdnH to give a hydroxylated cycloaraneosene derivative such as cycloaraneosene-8,9,13,19-tetraol. Although the order of the hydroxylations is unclear, at least C8, C9 and C13 of the cycloaraneosene skeleton are hydroxylated before the sordaricin formation. Dehydration of the 13-hydroxy group of the hydroxylated cycloaraneosene derivative might be catalyzed by an unassigned hypothetical protein such as sdnG and sdnP to construct the cyclopentadiene moiety. The FAD-dependent oxidoreductase sdnN is proposed to catalyze the oxidation at C9 of the hydroxylated cycloaraneosene derivative and also catalyze the Baeyer-Villiger oxidation to give the lactone intermediate. The presumed lactone intermediate would be hydrolyzed to give an acrolein moiety and a carboxylate moiety. Then, [4+2]cycloaddition would occur between the acrolein moiety and the cyclopentadiene moiety to give sordaricin. SdnN might also be involved in the [4+2]cycloaddition after the hypothesized oxidation to accommodate the oxidized product and prompt the [4+2]cycloaddition. GDP-6-deoxy-D-altrose may be biosynthesized from GDP-D-mannose by the putative GDP-mannose-4,6-dehydratase sdnI and the short-chain dehydrogenase sdnK. The glycosyltransferase sdnJ catalyzes the attachment of 6-deoxy-D-altrose onto the 19-hydroxy group of sordaricin to give 4'-O-demethylsordarin. The methyltransferase sdnD would complete the biosynthesis of sordarin. Sordarin can be further modified into hypoxysordarin. The unique acyl chain at the 3'-hydroxy group of hypoxysordarin would be constructed by an iterative type I PKS sdnO and the trans-acting polyketide methyltransferase sdnL. SdnL would be responsible for the introduction of an alpha-methyl group of the polyketide chain. Alternatively, the beta-lactamase-like protein sdnR might be responsible for the cleavage and transfer of the polyketide chain from the PKS sdnO to sordarin. Two putative cytochrome P450 monooxygenases, sdnQ and sdnT, might catalyze the epoxidations of the polyketide chain to complete the biosynthesis of hypoxysordarin. Transcriptional regulators sdnM and sdnS are presumably encoded for the transcriptional regulation of the expression of the sdn gene cluster. The protein is Glycosyltransferase sdnJ of Sordaria araneosa (Pleurage araneosa).